The primary structure comprises 246 residues: tRNA (guanine-N(1)-)-methyltransferase (246 aa).

S-adenosyl-L-methionine contacts are provided by residues Gly114 and 134 to 139 (IGDYIL).

The protein belongs to the RNA methyltransferase TrmD family. In terms of assembly, homodimer.

It is found in the cytoplasm. The catalysed reaction is guanosine(37) in tRNA + S-adenosyl-L-methionine = N(1)-methylguanosine(37) in tRNA + S-adenosyl-L-homocysteine + H(+). Functionally, specifically methylates guanosine-37 in various tRNAs. The sequence is that of tRNA (guanine-N(1)-)-methyltransferase from Coxiella burnetii (strain RSA 331 / Henzerling II).